Reading from the N-terminus, the 396-residue chain is MAKILAVNAGSSTLKWKLFDMPAEVQLAEGLVDRLGQPQSKVKIKYGDGQKYESDTPIANYQEAVASLMGNIKALGLVEHLHEITGVGHRVVAGGETFAESVVVDDATLLQIQNLRDYAPLHNPVEADYIDVFKKMMPWATEVAVFDTAFHQTMQPENFLYSIPYDYYKKYGARKYGAHGTSVRYVSARAAEMLNKPLEDLRMIVMHLGSGSSVTAVQGGQSIDTSMGFTPLAGVTMGTRSGDIDPSLVAYLMKKLDVPDVGQMIHILNNDSGLLGISGISNDMRDLEADEDTKPRAKLALDIFVNRVVKYVGSYAALMDGVDVLVFTAGIGENGDEIRDKIMRSLDYLGAKIDNDINYKSHGVEADLSTPDSTVKTLLVPTNEELMIVRDVMALS.

Asparagine 8 serves as a coordination point for Mg(2+). Lysine 15 contributes to the ATP binding site. Residue arginine 90 coordinates substrate. Catalysis depends on aspartate 147, which acts as the Proton donor/acceptor. ATP is bound by residues 207 to 211 (HLGSG), 283 to 285 (DMR), and 330 to 334 (GIGEN). Residue glutamate 384 coordinates Mg(2+).

This sequence belongs to the acetokinase family. In terms of assembly, homodimer. The cofactor is Mg(2+). Mn(2+) is required as a cofactor.

The protein localises to the cytoplasm. The catalysed reaction is acetate + ATP = acetyl phosphate + ADP. Its pathway is metabolic intermediate biosynthesis; acetyl-CoA biosynthesis; acetyl-CoA from acetate: step 1/2. Functionally, catalyzes the formation of acetyl phosphate from acetate and ATP. Can also catalyze the reverse reaction. The polypeptide is Acetate kinase (Lacticaseibacillus paracasei (strain ATCC 334 / BCRC 17002 / CCUG 31169 / CIP 107868 / KCTC 3260 / NRRL B-441) (Lactobacillus paracasei)).